The primary structure comprises 240 residues: MSKPKYNRVVLKLSGEALAGEQGFGINPTVIKSVAEQVKEIAELDVEVAVVVGGGNIWRGKIGSEMGMDRAGADYMGMLATVMNSLALQDSLENIGIQTRVQTSIEMRQVAEPYIRRKAVRHLEKKRVVIFAAGTGNPYFSTDTTAALRAAEIEADVILMAKNNVDGVYNADPSIDPTATKYETLTYLDVLKEGLGVMDSTASSLCMDNDIPLIVFSVMEKGNIKRAVLGENIGTVVRGK.

12 to 15 lines the ATP pocket; the sequence is KLSG. The involved in allosteric activation by GTP stretch occupies residues 20-25; that stretch reads GEQGFG. Gly54 lines the UMP pocket. Positions 55 and 59 each coordinate ATP. UMP contacts are provided by residues Asp74 and 135-142; that span reads TGNPYFST. ATP is bound by residues Asn163, Tyr169, and Asp172.

It belongs to the UMP kinase family. As to quaternary structure, homohexamer.

The protein localises to the cytoplasm. It catalyses the reaction UMP + ATP = UDP + ADP. It participates in pyrimidine metabolism; CTP biosynthesis via de novo pathway; UDP from UMP (UMPK route): step 1/1. Its activity is regulated as follows. Allosterically activated by GTP. Inhibited by UTP. Catalyzes the reversible phosphorylation of UMP to UDP. In Bacillus cereus (strain ATCC 14579 / DSM 31 / CCUG 7414 / JCM 2152 / NBRC 15305 / NCIMB 9373 / NCTC 2599 / NRRL B-3711), this protein is Uridylate kinase.